Consider the following 659-residue polypeptide: A-type ATP synthase subunit I (659 aa).

The next 8 helical transmembrane spans lie at 376–396 (FFFGFMLTDFVYGLLLGIISA), 415–435 (IMLWSSVFTMTLGILFGSYCG), 460–480 (MIALAIGLAHLFTGYLLGFIV), 489–509 (GAIFEQLSWLLIIIGITLFAL), 518–538 (LIVKGIFGIGLILFMIGEVLA), 542–562 (MAVLLVISDFFGFVGNWLSYA), 568–588 (ALATSGIALVINILVEMIWGI), and 590–610 (IASVPLGALIGILVLIGGHIF).

It belongs to the V-ATPase 116 kDa subunit family. As to quaternary structure, has multiple subunits with at least A(3), B(3), C, D, E, F, H, I and proteolipid K(x).

The protein resides in the cell membrane. In terms of biological role, component of the A-type ATP synthase that produces ATP from ADP in the presence of a proton gradient across the membrane. The polypeptide is A-type ATP synthase subunit I (Pyrococcus horikoshii (strain ATCC 700860 / DSM 12428 / JCM 9974 / NBRC 100139 / OT-3)).